The chain runs to 160 residues: Non-secretory ribonuclease (160 aa).

Residues 1-27 (MVPKLFTSQICLLLLLGLMGVEGSLHA) form the signal peptide. C-linked (Man) tryptophan glycosylation is present at W34. H42 (proton acceptor) is an active-site residue. N44 carries N-linked (GlcNAc...) asparagine glycosylation. 4 disulfide bridges follow: C50-C110, C64-C122, C82-C137, and C89-C98. A 3'-nitrotyrosine modification is found at Y60. 65–69 (KNQNT) is a binding site for substrate. 3 N-linked (GlcNAc...) asparagine glycosylation sites follow: N92, N111, and N138. The active-site Proton donor is H155.

It belongs to the pancreatic ribonuclease family. Interacts with and forms a tight 1:1 complex with RNH1. Dimerization of two such complexes may occur.

Its subcellular location is the lysosome. It is found in the cytoplasmic granule. The enzyme catalyses an [RNA] containing cytidine + H2O = an [RNA]-3'-cytidine-3'-phosphate + a 5'-hydroxy-ribonucleotide-3'-[RNA].. It catalyses the reaction an [RNA] containing uridine + H2O = an [RNA]-3'-uridine-3'-phosphate + a 5'-hydroxy-ribonucleotide-3'-[RNA].. This is a non-secretory ribonuclease. It is a pyrimidine specific nuclease with a slight preference for U. Cytotoxin and helminthotoxin. Possesses a wide variety of biological activities. The protein is Non-secretory ribonuclease (RNASE2) of Macaca fascicularis (Crab-eating macaque).